The primary structure comprises 91 residues: Cell division protein ZapA (91 aa).

Residues 58–91 (LTAVNIASEYLKLKEEYNRLREQLKKEKDGERDD) adopt a coiled-coil conformation.

This sequence belongs to the ZapA family. Type 2 subfamily. In terms of assembly, homodimer. Interacts with FtsZ.

It localises to the cytoplasm. In terms of biological role, activator of cell division through the inhibition of FtsZ GTPase activity, therefore promoting FtsZ assembly into bundles of protofilaments necessary for the formation of the division Z ring. It is recruited early at mid-cell but it is not essential for cell division. The polypeptide is Cell division protein ZapA (Geobacillus kaustophilus (strain HTA426)).